The chain runs to 418 residues: Serine hydroxymethyltransferase (418 aa).

(6S)-5,6,7,8-tetrahydrofolate is bound by residues Leu117 and 121-123 (GHL). Lys225 carries the post-translational modification N6-(pyridoxal phosphate)lysine.

It belongs to the SHMT family. In terms of assembly, homodimer. It depends on pyridoxal 5'-phosphate as a cofactor.

It localises to the cytoplasm. It carries out the reaction (6R)-5,10-methylene-5,6,7,8-tetrahydrofolate + glycine + H2O = (6S)-5,6,7,8-tetrahydrofolate + L-serine. Its pathway is one-carbon metabolism; tetrahydrofolate interconversion. It functions in the pathway amino-acid biosynthesis; glycine biosynthesis; glycine from L-serine: step 1/1. In terms of biological role, catalyzes the reversible interconversion of serine and glycine with tetrahydrofolate (THF) serving as the one-carbon carrier. This reaction serves as the major source of one-carbon groups required for the biosynthesis of purines, thymidylate, methionine, and other important biomolecules. Also exhibits THF-independent aldolase activity toward beta-hydroxyamino acids, producing glycine and aldehydes, via a retro-aldol mechanism. The polypeptide is Serine hydroxymethyltransferase (Mycoplasma mobile (strain ATCC 43663 / 163K / NCTC 11711) (Mesomycoplasma mobile)).